We begin with the raw amino-acid sequence, 339 residues long: UDP-glucose 4-epimerase (339 aa).

NAD(+) contacts are provided by residues 10–12 (GYI), 31–35 (DNLSN), 58–59 (DL), F80, and K84. Substrate is bound at residue 124 to 126 (SAT). Y148 functions as the Proton acceptor in the catalytic mechanism. K152 and Y176 together coordinate NAD(+). Substrate is bound by residues 176–178 (YFN), 197–199 (NNL), R230, and 291–294 (RPGD).

Belongs to the NAD(P)-dependent epimerase/dehydratase family. Requires NAD(+) as cofactor.

It carries out the reaction UDP-alpha-D-glucose = UDP-alpha-D-galactose. The enzyme catalyses UDP-N-acetyl-alpha-D-glucosamine = UDP-N-acetyl-alpha-D-galactosamine. The protein operates within cell wall biogenesis; teichoic acid biosynthesis. Its function is as follows. Catalyzes two distinct but analogous reactions: the reversible epimerization of UDP-glucose to UDP-galactose and the reversible epimerization of UDP-N-acetylglucosamine to UDP-N-acetylgalactosamine. The enzyme is more efficient in catalyzing the interconversion between unacetylated than between corresponding N-acetylated substrates. Essential for growth in media containing either glucose or galactose. May protect the cell from the toxic effects of galactose and glucose or derivatives of both sugars. Involved in the biosynthesis of teichoic acids via the formation of UDP-N-acetylgalactosamine. Influences cell division. The chain is UDP-glucose 4-epimerase from Bacillus subtilis (strain 168).